We begin with the raw amino-acid sequence, 27 residues long: Dermaseptin-like peptide (27 aa).

Its function is as follows. Has antimicrobial activity against the Gram-positive bacterium M.luteus and the yeast C.albicans. Has hemolytic activity on human and duck erythrocytes. The protein is Dermaseptin-like peptide of Schistosoma mansoni (Blood fluke).